The primary structure comprises 296 residues: Nucleotide-binding protein SSA_0810 (296 aa).

13 to 20 (GMSGAGKT) provides a ligand contact to ATP. A GTP-binding site is contributed by 63–66 (DMRS). Positions 277-296 (WPVNSSHRDKNRRKETVNRS) are disordered. Residues 282-296 (SHRDKNRRKETVNRS) show a composition bias toward basic and acidic residues.

The protein belongs to the RapZ-like family.

Displays ATPase and GTPase activities. This chain is Nucleotide-binding protein SSA_0810, found in Streptococcus sanguinis (strain SK36).